A 417-amino-acid polypeptide reads, in one-letter code: D-amino acid dehydrogenase (417 aa).

3-17 is an FAD binding site; sequence AVVLGSGVVGLMSAW.

The protein belongs to the DadA oxidoreductase family. It depends on FAD as a cofactor.

It catalyses the reaction a D-alpha-amino acid + A + H2O = a 2-oxocarboxylate + AH2 + NH4(+). In terms of biological role, oxidative deamination of D-amino acids. The chain is D-amino acid dehydrogenase from Vibrio vulnificus (strain YJ016).